The chain runs to 481 residues: Bestrophin homolog 17 (481 aa).

Residues 1 to 27 (MTVSYQLDVSSGNPLLFLRLLGRWRGS) lie on the Cytoplasmic side of the membrane. A helical transmembrane segment spans residues 28-48 (IWKSVVGDLFVWLLFYYAIYF). The Extracellular portion of the chain corresponds to 49 to 95 (AYRYAFSKQLQTVFEEISIHTDDRMKYLPLTFMLGFFVTTVFERWRS). A helical transmembrane segment spans residues 96–116 (ALNVMPFIESVALSVAVLLPG). At 117–230 (KGREDRLTRR…AMETLIKFDA (114 aa)) the chain is on the cytoplasmic side. Residues 231 to 251 (IPIPIAYPQVVFLAVRVYFAI) traverse the membrane as a helical segment. Residues 252-274 (CLVSRQFLISDMKSKTQMDWPVP) are Extracellular-facing. The chain crosses the membrane as a helical span at residues 275-295 (IMTVLEFIFVIGWMKVAEVLL). Residues 296-481 (NPLGEDDDDF…SSEESVDKKG (186 aa)) lie on the Cytoplasmic side of the membrane. The segment at 427-481 (AGMLNKSTQPDRPTMETVSEEHEPSHFYRGDRVHSSDSGLSKTQQSSEESVDKKG) is disordered. Positions 445 to 461 (SEEHEPSHFYRGDRVHS) are enriched in basic and acidic residues. A compositionally biased stretch (polar residues) spans 462–474 (SDSGLSKTQQSSE).

The protein belongs to the anion channel-forming bestrophin (TC 1.A.46) family. Calcium-sensitive chloride channel subfamily. As to quaternary structure, forms oligomers.

The protein resides in the cell membrane. Functionally, forms chloride channels. This Caenorhabditis elegans protein is Bestrophin homolog 17.